A 163-amino-acid polypeptide reads, in one-letter code: Nucleotide-binding protein BC_1159 (163 aa).

Belongs to the YajQ family.

Functionally, nucleotide-binding protein. The sequence is that of Nucleotide-binding protein BC_1159 from Bacillus cereus (strain ATCC 14579 / DSM 31 / CCUG 7414 / JCM 2152 / NBRC 15305 / NCIMB 9373 / NCTC 2599 / NRRL B-3711).